The following is a 320-amino-acid chain: ATP-dependent 6-phosphofructokinase (320 aa).

Gly12 contributes to the ATP binding site. ADP is bound by residues 22–26 (RGVVR) and 55–60 (RYSVSD). ATP-binding positions include 73-74 (RF) and 103-106 (GDGS). Asp104 is a Mg(2+) binding site. Position 126 to 128 (126 to 128 (TID)) interacts with substrate. Residue Asp128 is the Proton acceptor of the active site. Arg155 lines the ADP pocket. Residues Arg163 and 170 to 172 (MGR) contribute to the substrate site. ADP contacts are provided by residues 186–188 (GCE), Lys212, and 214–216 (KKH). Substrate-binding positions include Glu223, Arg244, and 250-253 (HIQR).

It belongs to the phosphofructokinase type A (PFKA) family. ATP-dependent PFK group I subfamily. Prokaryotic clade 'B1' sub-subfamily. As to quaternary structure, homotetramer. Mg(2+) is required as a cofactor.

The protein resides in the cytoplasm. The enzyme catalyses beta-D-fructose 6-phosphate + ATP = beta-D-fructose 1,6-bisphosphate + ADP + H(+). Its pathway is carbohydrate degradation; glycolysis; D-glyceraldehyde 3-phosphate and glycerone phosphate from D-glucose: step 3/4. With respect to regulation, allosterically activated by ADP and other diphosphonucleosides, and allosterically inhibited by phosphoenolpyruvate. Catalyzes the phosphorylation of D-fructose 6-phosphate to fructose 1,6-bisphosphate by ATP, the first committing step of glycolysis. In Pectobacterium carotovorum subsp. carotovorum (strain PC1), this protein is ATP-dependent 6-phosphofructokinase.